The sequence spans 177 residues: MKLPKEGDFITIQSYKHDGSLHRTWRDTMVLKTTENAIIGVNDHTLVTESDGRRWVTREPAIVYFHKKYWFNIIAMIRDNGTSYYCNMASPYYXDEXALKYIDYDLDVKIFTDGEKRXLDVEEYERHKRKMNYSDDLDYILKEHVKILVXWINNGRGPFSEAYVNIWYKRYVELKNR.

Arginine 23 serves as the catalytic Proton donor. 6 residues coordinate Mg(2+): asparagine 87, aspartate 103, aspartate 105, aspartate 107, aspartate 120, and glutamate 123.

It belongs to the Ntdp family. The cofactor is Mg(2+).

It catalyses the reaction a ribonucleoside 5'-triphosphate + H2O = a ribonucleoside 5'-diphosphate + phosphate + H(+). It carries out the reaction a ribonucleoside 5'-diphosphate + H2O = a ribonucleoside 5'-phosphate + phosphate + H(+). In terms of biological role, has nucleoside phosphatase activity towards nucleoside triphosphates and nucleoside diphosphates. In Streptococcus pneumoniae serotype 19F (strain G54), this protein is Nucleoside triphosphate/diphosphate phosphatase.